The sequence spans 75 residues: Large ribosomal subunit protein bL31 (75 aa).

Belongs to the bacterial ribosomal protein bL31 family. Type A subfamily. As to quaternary structure, part of the 50S ribosomal subunit.

Its function is as follows. Binds the 23S rRNA. This is Large ribosomal subunit protein bL31 from Sphingopyxis alaskensis (strain DSM 13593 / LMG 18877 / RB2256) (Sphingomonas alaskensis).